Here is a 429-residue protein sequence, read N- to C-terminus: Proton/sodium-glutamate symport protein (429 aa).

Residues 1 to 5 are Cytoplasmic-facing; it reads MKRIK. A helical membrane pass occupies residues 6-26; sequence FGLATQIFVGLILGVIVGVIW. The Extracellular segment spans residues 27 to 45; that stretch reads YGNPALPTYLQPIGDLFLR. Residues 46–66 form a helical membrane-spanning segment; sequence LIKMIVIPIVVSSLIIGVAGA. Topologically, residues 67–79 are cytoplasmic; it reads GNGKQVGKLGFRT. The helical transmembrane segment at 80-100 threads the bilayer; sequence ILYFEIITTFAIILGLALANI. Over 101–150 the chain is Extracellular; the sequence is FHPGTGVNIHEAQKSDISQYVETEKEQSNKSVAETFLHIVPTNFFQSLVE. The chain crosses the membrane as a helical span at residues 151–171; the sequence is GDLLAIICFTVLFALGISAIG. The Cytoplasmic segment spans residues 172-190; the sequence is ERGKPVLAFFEGVSHAMFH. The helical transmembrane segment at 191–211 threads the bilayer; sequence VVNLVMKVAPFGVFALIGVTV. At 212–224 the chain is on the extracellular side; it reads SKFGLGSLISLGK. Residues 225-245 form a helical membrane-spanning segment; the sequence is LVGLVYVALAFFLIVIFGIVA. Residue K246 is a topological domain, cytoplasmic. Residues 247–267 traverse the membrane as a helical segment; it reads IAGISIFKFLAYMKDEILLAF. The Extracellular segment spans residues 268–290; the sequence is STSSSETVLPRIMEKMEKIGCPK. Residues 291 to 311 form a helical membrane-spanning segment; it reads GIVSFVIPIGYTFNLDGSVLY. The Cytoplasmic portion of the chain corresponds to 312 to 321; sequence QSIAALFLAQ. A helical transmembrane segment spans residues 322–342; it reads VYGIDLTIWHQITLVLVLMVT. Over 343-353 the chain is Extracellular; that stretch reads SKGMAAVPGTS. A helical membrane pass occupies residues 354 to 374; it reads FVVLLATLGTIGVPAEGLAFI. Residues 375-429 lie on the Cytoplasmic side of the membrane; it reads AGVDRIMDMARTVVNLTGNALAAVVMSKWEGMFNPAKAETVMSQSKTEQNATISG.

It belongs to the dicarboxylate/amino acid:cation symporter (DAACS) (TC 2.A.23) family. In terms of assembly, homotrimer. Interacts with FloT.

It localises to the cell membrane. The protein resides in the membrane raft. In terms of biological role, this carrier protein is part of the Na(+)-dependent, binding-protein-independent glutamate-aspartate transport system. The chain is Proton/sodium-glutamate symport protein (gltT) from Bacillus subtilis (strain 168).